Reading from the N-terminus, the 316-residue chain is 4-hydroxy-3-methylbut-2-enyl diphosphate reductase (316 aa).

Cys-12 is a [4Fe-4S] cluster binding site. (2E)-4-hydroxy-3-methylbut-2-enyl diphosphate is bound by residues His-43 and His-81. Positions 43 and 81 each coordinate dimethylallyl diphosphate. Residues His-43 and His-81 each contribute to the isopentenyl diphosphate site. Cys-103 is a [4Fe-4S] cluster binding site. His-131 contributes to the (2E)-4-hydroxy-3-methylbut-2-enyl diphosphate binding site. His-131 provides a ligand contact to dimethylallyl diphosphate. Residue His-131 coordinates isopentenyl diphosphate. Glu-133 functions as the Proton donor in the catalytic mechanism. (2E)-4-hydroxy-3-methylbut-2-enyl diphosphate is bound at residue Thr-170. Cys-198 lines the [4Fe-4S] cluster pocket. The (2E)-4-hydroxy-3-methylbut-2-enyl diphosphate site is built by Ser-226, Asn-228, and Ser-271. Residues Ser-226, Asn-228, and Ser-271 each contribute to the dimethylallyl diphosphate site. Isopentenyl diphosphate is bound by residues Ser-226, Asn-228, and Ser-271.

Belongs to the IspH family. The cofactor is [4Fe-4S] cluster.

The enzyme catalyses isopentenyl diphosphate + 2 oxidized [2Fe-2S]-[ferredoxin] + H2O = (2E)-4-hydroxy-3-methylbut-2-enyl diphosphate + 2 reduced [2Fe-2S]-[ferredoxin] + 2 H(+). It carries out the reaction dimethylallyl diphosphate + 2 oxidized [2Fe-2S]-[ferredoxin] + H2O = (2E)-4-hydroxy-3-methylbut-2-enyl diphosphate + 2 reduced [2Fe-2S]-[ferredoxin] + 2 H(+). The protein operates within isoprenoid biosynthesis; dimethylallyl diphosphate biosynthesis; dimethylallyl diphosphate from (2E)-4-hydroxy-3-methylbutenyl diphosphate: step 1/1. It functions in the pathway isoprenoid biosynthesis; isopentenyl diphosphate biosynthesis via DXP pathway; isopentenyl diphosphate from 1-deoxy-D-xylulose 5-phosphate: step 6/6. In terms of biological role, catalyzes the conversion of 1-hydroxy-2-methyl-2-(E)-butenyl 4-diphosphate (HMBPP) into a mixture of isopentenyl diphosphate (IPP) and dimethylallyl diphosphate (DMAPP). Acts in the terminal step of the DOXP/MEP pathway for isoprenoid precursor biosynthesis. In Bacillus mycoides (strain KBAB4) (Bacillus weihenstephanensis), this protein is 4-hydroxy-3-methylbut-2-enyl diphosphate reductase.